Consider the following 373-residue polypeptide: uncharacterized protein (373 aa).

This is an uncharacterized protein from Saccharomyces cerevisiae (strain ATCC 204508 / S288c) (Baker's yeast).